A 449-amino-acid polypeptide reads, in one-letter code: Glucose-6-phosphate isomerase (449 aa).

The active-site Proton donor is the Glu-291. Catalysis depends on residues His-312 and Lys-426.

The protein belongs to the GPI family.

It is found in the cytoplasm. The catalysed reaction is alpha-D-glucose 6-phosphate = beta-D-fructose 6-phosphate. Its pathway is carbohydrate biosynthesis; gluconeogenesis. It functions in the pathway carbohydrate degradation; glycolysis; D-glyceraldehyde 3-phosphate and glycerone phosphate from D-glucose: step 2/4. In terms of biological role, catalyzes the reversible isomerization of glucose-6-phosphate to fructose-6-phosphate. This chain is Glucose-6-phosphate isomerase, found in Clostridium botulinum (strain Eklund 17B / Type B).